The sequence spans 359 residues: Protein FAM50 homolog (359 aa).

2 disordered regions span residues 122 to 150 (NLDD…EDQP) and 339 to 359 (PYDP…KSKK). The span at 123-136 (LDDDEEEEEEDDED) shows a compositional bias: acidic residues. Basic and acidic residues predominate over residues 137-150 (HDKKQLKIKQEDQP).

It belongs to the FAM50 family.

In Drosophila melanogaster (Fruit fly), this protein is Protein FAM50 homolog.